The primary structure comprises 232 residues: Chromosome partition protein MukE (232 aa).

Positions 203 to 232 are disordered; the sequence is HTKEPSQGSLLSEEDQEEQAQEEMTEEGEA. Residues 214 to 232 show a composition bias toward acidic residues; sequence SEEDQEEQAQEEMTEEGEA.

It belongs to the MukE family. As to quaternary structure, interacts, and probably forms a ternary complex, with MukF and MukB. The complex formation is stimulated by calcium or magnesium.

It localises to the cytoplasm. Its subcellular location is the nucleoid. Functionally, involved in chromosome condensation, segregation and cell cycle progression. May participate in facilitating chromosome segregation by condensation DNA from both sides of a centrally located replisome during cell division. Probably acts via its interaction with MukB and MukF. The chain is Chromosome partition protein MukE from Vibrio parahaemolyticus serotype O3:K6 (strain RIMD 2210633).